A 395-amino-acid chain; its full sequence is S-adenosylmethionine synthase (395 aa).

Histidine 14 is a binding site for ATP. Aspartate 16 contacts Mg(2+). Glutamate 42 is a K(+) binding site. Glutamate 55 and glutamine 98 together coordinate L-methionine. A flexible loop region spans residues 98-108 (QSPDIALGVDK). Residues 175–177 (DGK), 242–243 (RF), aspartate 251, 257–258 (RK), alanine 274, and lysine 278 each bind ATP. Aspartate 251 provides a ligand contact to L-methionine. Lysine 282 contacts L-methionine.

It belongs to the AdoMet synthase family. As to quaternary structure, homotetramer; dimer of dimers. Mg(2+) serves as cofactor. The cofactor is K(+).

The protein resides in the cytoplasm. The catalysed reaction is L-methionine + ATP + H2O = S-adenosyl-L-methionine + phosphate + diphosphate. It functions in the pathway amino-acid biosynthesis; S-adenosyl-L-methionine biosynthesis; S-adenosyl-L-methionine from L-methionine: step 1/1. Its function is as follows. Catalyzes the formation of S-adenosylmethionine (AdoMet) from methionine and ATP. The overall synthetic reaction is composed of two sequential steps, AdoMet formation and the subsequent tripolyphosphate hydrolysis which occurs prior to release of AdoMet from the enzyme. This Thermosipho africanus (strain TCF52B) protein is S-adenosylmethionine synthase.